Reading from the N-terminus, the 174-residue chain is ATP-dependent protease subunit HslV (174 aa).

Thr-2 is a catalytic residue. Positions 157, 160, and 163 each coordinate Na(+).

It belongs to the peptidase T1B family. HslV subfamily. As to quaternary structure, a double ring-shaped homohexamer of HslV is capped on each side by a ring-shaped HslU homohexamer. The assembly of the HslU/HslV complex is dependent on binding of ATP.

It is found in the cytoplasm. The catalysed reaction is ATP-dependent cleavage of peptide bonds with broad specificity.. With respect to regulation, allosterically activated by HslU binding. Functionally, protease subunit of a proteasome-like degradation complex believed to be a general protein degrading machinery. This chain is ATP-dependent protease subunit HslV, found in Shewanella sediminis (strain HAW-EB3).